The sequence spans 355 residues: MAEFVRAQIFGTTFEITSRYTDLQPVGMGAFGLVCSAKDQLTSQAVAIKKIMKPFSTPVLSKRTYRELKLLKHLRHENIISLSDIFISPLEDIYFVTELLGTDLHRLLTSRPLEKQFIQYFLYQILRGLKYVHSAGVVHRDLKPSNILVNENCDLKICDFGLARIQDPQMTGYVSTRYYRAPEIMLTWQKYDVEVDVWSAGCIFAEMLEGKPLFPGKDHVNQFSIITELLGTPPDDVIHTICSENTLRFVQSLPKRERQPLANKFKNAEPAAVDLLENMLVFDPKKRVRAEQALAHPYLAPYHDPTDEPVAEEKFDWSFNDADLPVDTWKIMMYSEILDYHNVDAAAQEGENGGS.

Residues 20 to 299 enclose the Protein kinase domain; it reads YTDLQPVGMG…AEQALAHPYL (280 aa). ATP is bound by residues 26–34 and Lys-49; that span reads VGMGAFGLV. Catalysis depends on Asp-141, which acts as the Proton acceptor. The residue at position 171 (Thr-171) is a Phosphothreonine. A TXY motif is present at residues 171–173; that stretch reads TGY. At Tyr-173 the chain carries Phosphotyrosine.

The protein belongs to the protein kinase superfamily. Ser/Thr protein kinase family. MAP kinase subfamily. HOG1 sub-subfamily. Requires Mg(2+) as cofactor. In terms of processing, dually phosphorylated on Thr-171 and Tyr-173, which activates the enzyme.

The protein resides in the cytoplasm. It is found in the nucleus. The enzyme catalyses L-seryl-[protein] + ATP = O-phospho-L-seryl-[protein] + ADP + H(+). It carries out the reaction L-threonyl-[protein] + ATP = O-phospho-L-threonyl-[protein] + ADP + H(+). Its activity is regulated as follows. Activated by tyrosine and threonine phosphorylation. In terms of biological role, proline-directed serine/threonine-protein kinase involved in a signal transduction pathway that is activated by changes in the osmolarity of the extracellular environment. Controls osmotic regulation of transcription of target genes. The protein is Mitogen-activated protein kinase HOG1 (HOG1) of Phaeosphaeria nodorum (strain SN15 / ATCC MYA-4574 / FGSC 10173) (Glume blotch fungus).